We begin with the raw amino-acid sequence, 685 residues long: DEAD-box ATP-dependent RNA helicase 7 (685 aa).

Positions 1 to 89 are disordered; that stretch reads MPSISMMSDA…SELVQADDLK (89 aa). Basic and acidic residues-rich tracts occupy residues 22 to 42 and 66 to 78; these read MKSE…SSSK and AVDL…KSDN. The Q motif motif lies at 107–135; the sequence is NSLSNFRISKPLKDVLISKGIKALFPIQA. The Helicase ATP-binding domain maps to 138–320; sequence FDNVIDGCDL…TRFLKSAKKT (183 aa). Position 151–158 (151–158) interacts with ATP; sequence ARTGQGKT. Positions 266 to 269 match the DEAD box motif; the sequence is DEAD. The region spanning 349–491 is the Helicase C-terminal domain; sequence DLIPDIIRCY…LSAPQPVDVA (143 aa).

This sequence belongs to the DEAD box helicase family. DDX21/DDX50 subfamily.

It is found in the nucleus. The enzyme catalyses ATP + H2O = ADP + phosphate + H(+). The protein is DEAD-box ATP-dependent RNA helicase 7 (RH7) of Spinacia oleracea (Spinach).